The primary structure comprises 703 residues: Ubiquitin-like modifier-activating enzyme ATG7 (703 aa).

Ala2 is modified (N-acetylalanine). Positions 15-17 (FAP) match the FAP motif motif. A Glycyl lysine isopeptide (Lys-Gly) (interchain with G-Cter in ubiquitin) cross-link involves residue Lys45. The active-site Glycyl thioester intermediate is Cys572. Ser698 carries the phosphoserine modification.

It belongs to the ATG7 family. As to quaternary structure, homodimer. Interacts with ATG3; this interaction is essential for the transfer of ATG8-like proteins's thioester from ATG7 to ATG3 and plays a role in the conjugation of ATG12 to ATG5. Interacts with ATG12. Forms intermediate conjugates with GABARAPL1. Forms intermediate conjugates with ATG8-like proteins such as GABARAP, GABARAPL2 or MAP1LC3A. Interacts with EP300 acetyltransferase. Interacts with FOXO1. Acetylated by EP300. Post-translationally, polyubiquitinated on Lys-45 via 'Lys-63'-linked ubiquitin by TRIM32; this modification positiely regulates ATG8 and ATG12 activating enzyme activity leading to initiation of autophagy under metabolic stress. Widely expressed, especially in kidney, liver, lymph nodes and bone marrow.

It localises to the cytoplasm. Its subcellular location is the preautophagosomal structure. Its function is as follows. E1-like activating enzyme involved in the 2 ubiquitin-like systems required for cytoplasm to vacuole transport (Cvt) and autophagy. Activates ATG12 for its conjugation with ATG5 as well as the ATG8 family proteins for their conjugation with phosphatidylethanolamine. Both systems are needed for the ATG8 association to Cvt vesicles and autophagosomes membranes. Required for autophagic death induced by caspase-8 inhibition. Facilitates LC3-I lipidation with phosphatidylethanolamine to form LC3-II which is found on autophagosomal membranes. Required for mitophagy which contributes to regulate mitochondrial quantity and quality by eliminating the mitochondria to a basal level to fulfill cellular energy requirements and preventing excess ROS production. Modulates p53/TP53 activity to regulate cell cycle and survival during metabolic stress. Also plays a key role in the maintenance of axonal homeostasis, the prevention of axonal degeneration, the maintenance of hematopoietic stem cells, the formation of Paneth cell granules, as well as in adipose differentiation. Plays a role in regulating the liver clock and glucose metabolism by mediating the autophagic degradation of CRY1 (clock repressor) in a time-dependent manner. In Homo sapiens (Human), this protein is Ubiquitin-like modifier-activating enzyme ATG7.